Here is a 221-residue protein sequence, read N- to C-terminus: Glycerol metabolism activator (221 aa).

A Response regulatory domain is found at 3–120 (KILIADDHPL…QMTDAIEQIL (118 aa)). Asp-55 carries the 4-aspartylphosphate modification. The region spanning 149-214 (APELLQALTR…QAILSAGDID (66 aa)) is the HTH luxR-type domain. A DNA-binding region (H-T-H motif) is located at residues 173-192 (NKQIAYNLDIAETTVKAHVS).

In terms of biological role, positive activator for glycerol metabolism. Regulates the expression of qedA in a positive manner and governs the expression of ADH I and ADH IIB. General regulator of quinoprotein ethanol oxidation and affects expression of ADH IIG activity but is not the sole regulator. The chain is Glycerol metabolism activator from Pseudomonas putida (Arthrobacter siderocapsulatus).